We begin with the raw amino-acid sequence, 381 residues long: Succinyl-diaminopimelate desuccinylase (381 aa).

H69 provides a ligand contact to Zn(2+). Residue D71 is part of the active site. Residue D103 coordinates Zn(2+). E137 acts as the Proton acceptor in catalysis. Zn(2+) is bound by residues E138, E166, and H355.

It belongs to the peptidase M20A family. DapE subfamily. Homodimer. Zn(2+) serves as cofactor. It depends on Co(2+) as a cofactor.

The enzyme catalyses N-succinyl-(2S,6S)-2,6-diaminopimelate + H2O = (2S,6S)-2,6-diaminopimelate + succinate. It participates in amino-acid biosynthesis; L-lysine biosynthesis via DAP pathway; LL-2,6-diaminopimelate from (S)-tetrahydrodipicolinate (succinylase route): step 3/3. Its function is as follows. Catalyzes the hydrolysis of N-succinyl-L,L-diaminopimelic acid (SDAP), forming succinate and LL-2,6-diaminopimelate (DAP), an intermediate involved in the bacterial biosynthesis of lysine and meso-diaminopimelic acid, an essential component of bacterial cell walls. The polypeptide is Succinyl-diaminopimelate desuccinylase (Rickettsia massiliae (strain Mtu5)).